Consider the following 159-residue polypeptide: 2-C-methyl-D-erythritol 2,4-cyclodiphosphate synthase (159 aa).

2 residues coordinate a divalent metal cation: Asp-10 and His-12. 4-CDP-2-C-methyl-D-erythritol 2-phosphate-binding positions include 10 to 12 and 37 to 38; these read DVH and HS. His-45 is a binding site for a divalent metal cation. Residues 59–61, 64–68, 103–109, 135–138, Phe-142, and Arg-145 each bind 4-CDP-2-C-methyl-D-erythritol 2-phosphate; these read DIG, FLDTD, AQAPKML, and TTTE.

It belongs to the IspF family. Homotrimer. A divalent metal cation is required as a cofactor.

It catalyses the reaction 4-CDP-2-C-methyl-D-erythritol 2-phosphate = 2-C-methyl-D-erythritol 2,4-cyclic diphosphate + CMP. Its pathway is isoprenoid biosynthesis; isopentenyl diphosphate biosynthesis via DXP pathway; isopentenyl diphosphate from 1-deoxy-D-xylulose 5-phosphate: step 4/6. Its function is as follows. Involved in the biosynthesis of isopentenyl diphosphate (IPP) and dimethylallyl diphosphate (DMAPP), two major building blocks of isoprenoid compounds. Catalyzes the conversion of 4-diphosphocytidyl-2-C-methyl-D-erythritol 2-phosphate (CDP-ME2P) to 2-C-methyl-D-erythritol 2,4-cyclodiphosphate (ME-CPP) with a corresponding release of cytidine 5-monophosphate (CMP). This chain is 2-C-methyl-D-erythritol 2,4-cyclodiphosphate synthase, found in Francisella tularensis subsp. holarctica (strain FTNF002-00 / FTA).